The chain runs to 90 residues: U7-theraphotoxin-Hhn1a 4 (90 aa).

Residues 1 to 19 form the signal peptide; sequence MKTAIFTVVLALAVFAVLS. Positions 20–50 are excised as a propeptide; it reads FGWEANEEALSEEFTELIHEKEAASETEARE. Disulfide bonds link Cys51/Cys65, Cys58/Cys70, and Cys64/Cys81.

It belongs to the neurotoxin 10 (Hwtx-1) family. 13 (Hntx-13) subfamily. As to expression, expressed by the venom gland.

It is found in the secreted. Its function is as follows. Ion channel inhibitor. In Cyriopagopus hainanus (Chinese bird spider), this protein is U7-theraphotoxin-Hhn1a 4.